The chain runs to 110 residues: Flowering-promoting factor 1 (110 aa).

Belongs to the FPF1 family.

Modulates the competence to flowering of apical meristems. Involved in a GA-dependent response in apical meristems during the transition to flowering. The polypeptide is Flowering-promoting factor 1 (FPF1) (Arabidopsis thaliana (Mouse-ear cress)).